The following is a 67-amino-acid chain: Prokaryotic ubiquitin-like protein Pup (67 aa).

A compositionally biased stretch (low complexity) spans 1–13 (MAGQEQQQPQSRD). The tract at residues 1 to 48 (MAGQEQQQPQSRDSQVDEDIPEAPPAPPEAQASASTEGVDDLLDEIDG) is disordered. The interval 25-61 (PAPPEAQASASTEGVDDLLDEIDGVLESNAEEFVRAF) is ARC ATPase binding. The segment covering 38-48 (GVDDLLDEIDG) has biased composition (acidic residues). Position 67 is a deamidated glutamine (glutamine 67). Glutamine 67 is covalently cross-linked (Isoglutamyl lysine isopeptide (Gln-Lys) (interchain with K-? in acceptor proteins)).

It belongs to the prokaryotic ubiquitin-like protein family. As to quaternary structure, strongly interacts with the proteasome-associated ATPase ARC through a hydrophobic interface; the interacting region of Pup lies in its C-terminal half. There is one Pup binding site per ARC hexamer ring. Post-translationally, is modified by deamidation of its C-terminal glutamine to glutamate by the deamidase Dop, a prerequisite to the subsequent pupylation process.

It participates in protein degradation; proteasomal Pup-dependent pathway. Functionally, protein modifier that is covalently attached to lysine residues of substrate proteins, thereby targeting them for proteasomal degradation. The tagging system is termed pupylation. This Pseudarthrobacter chlorophenolicus (strain ATCC 700700 / DSM 12829 / CIP 107037 / JCM 12360 / KCTC 9906 / NCIMB 13794 / A6) (Arthrobacter chlorophenolicus) protein is Prokaryotic ubiquitin-like protein Pup.